We begin with the raw amino-acid sequence, 399 residues long: Tryptophan synthase beta chain (399 aa).

Position 90 is an N6-(pyridoxal phosphate)lysine (lysine 90).

The protein belongs to the TrpB family. In terms of assembly, tetramer of two alpha and two beta chains. It depends on pyridoxal 5'-phosphate as a cofactor.

It carries out the reaction (1S,2R)-1-C-(indol-3-yl)glycerol 3-phosphate + L-serine = D-glyceraldehyde 3-phosphate + L-tryptophan + H2O. It functions in the pathway amino-acid biosynthesis; L-tryptophan biosynthesis; L-tryptophan from chorismate: step 5/5. The beta subunit is responsible for the synthesis of L-tryptophan from indole and L-serine. This is Tryptophan synthase beta chain from Bacillus pumilus (strain SAFR-032).